Here is a 197-residue protein sequence, read N- to C-terminus: C-type lectin domain family 3 member A (197 aa).

An N-terminal signal peptide occupies residues 1–22 (MAKNGLVICILVITLLLDQTTS). 3 cysteine pairs are disulfide-bonded: Cys68-Cys78, Cys95-Cys191, and Cys167-Cys183. Residues 74-192 (VHKKCYLASE…CRSSKRYICE (119 aa)) enclose the C-type lectin domain.

In terms of tissue distribution, restricted to cartilage and breast. Also expressed in breast cancers.

The protein resides in the secreted. Functionally, promotes cell adhesion to laminin-332 and fibronectin. The sequence is that of C-type lectin domain family 3 member A (CLEC3A) from Homo sapiens (Human).